Here is a 343-residue protein sequence, read N- to C-terminus: Aspartate carbamoyltransferase catalytic subunit (343 aa).

A compositionally biased stretch (polar residues) spans 1–14 (MTTDTTGRTGNPAA). Positions 1–20 (MTTDTTGRTGNPAATASPDR) are disordered. 2 residues coordinate carbamoyl phosphate: R91 and T92. K119 is a binding site for L-aspartate. Carbamoyl phosphate is bound by residues R141, H171, and Q174. R204 and R259 together coordinate L-aspartate. Carbamoyl phosphate is bound by residues G300 and P301.

This sequence belongs to the aspartate/ornithine carbamoyltransferase superfamily. ATCase family. As to quaternary structure, heterododecamer (2C3:3R2) of six catalytic PyrB chains organized as two trimers (C3), and six regulatory PyrI chains organized as three dimers (R2).

It catalyses the reaction carbamoyl phosphate + L-aspartate = N-carbamoyl-L-aspartate + phosphate + H(+). The protein operates within pyrimidine metabolism; UMP biosynthesis via de novo pathway; (S)-dihydroorotate from bicarbonate: step 2/3. Functionally, catalyzes the condensation of carbamoyl phosphate and aspartate to form carbamoyl aspartate and inorganic phosphate, the committed step in the de novo pyrimidine nucleotide biosynthesis pathway. In Burkholderia lata (strain ATCC 17760 / DSM 23089 / LMG 22485 / NCIMB 9086 / R18194 / 383), this protein is Aspartate carbamoyltransferase catalytic subunit.